The following is a 980-amino-acid chain: Macrophage colony-stimulating factor 1 receptor (980 aa).

A signal peptide spans 1–19 (MGPRALLVLLVATAWHAQG). The Extracellular segment spans residues 20-514 (VPVIQPSGPE…QLPDELLFTP (495 aa)). 5 consecutive Ig-like C2-type domains span residues 21-100 (PVIQ…IHLY), 107-197 (PWKV…KVQK), 202-297 (PATL…RVVE), 299-397 (AYLN…LTLR), and 400-499 (PEVR…WPIS). An intrachain disulfide couples C42 to C84. 11 N-linked (GlcNAc...) asparagine glycosylation sites follow: N45, N73, N94, N153, N275, N286, N302, N335, N410, N477, and N490. 2 cysteine pairs are disulfide-bonded: C127–C177 and C224–C278. C417 and C482 are joined by a disulfide. Residues 515–535 (VLLTCMSIMALLLLLLLLLLY) form a helical membrane-spanning segment. Residues 536–980 (KYKQKPKYQV…LLQPNNYQFC (445 aa)) are Cytoplasmic-facing. Residues 539–571 (QKPKYQVRWKIIESYEGNSYTFIDPTQLPYNEK) form a regulatory juxtamembrane domain region. Residues Y543 and Y558 each carry the phosphotyrosine; by autocatalysis modification. In terms of domain architecture, Protein kinase spans 579 to 908 (LQFGKTLGAG…PTFQQICSLL (330 aa)). ATP-binding positions include 585–593 (LGAGAFGKV) and K613. Phosphotyrosine; by autocatalysis occurs at positions 696 and 705. At S710 the chain carries Phosphoserine. Y720 is subject to Phosphotyrosine; by autocatalysis. Positions 723-743 (MRPVSTSSSNDSFSEEDLGKE) are disordered. D776 (proton acceptor) is an active-site residue. Residues 794–816 (DFGLARDIMNDSNYIVKGNARLP) are activation loop. Phosphotyrosine; by autocatalysis is present on residues Y807 and Y921. The segment at 918–959 (VPNYTNLPSSSSSSSSSSSSCRTGSGGGSSSEPEEESSSEHL) is disordered. Low complexity predominate over residues 926 to 940 (SSSSSSSSSSSSCRT). A Phosphotyrosine; by autocatalysis modification is found at Y977.

Belongs to the protein kinase superfamily. Tyr protein kinase family. CSF-1/PDGF receptor subfamily. As to quaternary structure, monomer. Homodimer. Interacts with CSF1 and IL34. Interaction with dimeric CSF1 or IL34 leads to receptor homodimerization. Interacts with INPPL1/SHIP2 and THOC5. Interacts (tyrosine phosphorylated) with PLCG2 (via SH2 domain). Interacts (tyrosine phosphorylated) with PIK3R1 (via SH2 domain). Interacts (tyrosine phosphorylated) with FYN, YES1 and SRC (via SH2 domain). Interacts (tyrosine phosphorylated) with CBL, GRB2 and SLA2. Post-translationally, autophosphorylated in response to CSF1 or IL34 binding. Phosphorylation at Tyr-558 is important for normal down-regulation of signaling by ubiquitination, internalization and degradation. Phosphorylation at Tyr-558 and Tyr-807 is important for interaction with SRC family members, including FYN, YES1 and SRC, and for subsequent activation of these protein kinases. Phosphorylation at Tyr-696 and Tyr-921 is important for interaction with GRB2. Phosphorylation at Tyr-720 is important for interaction with PIK3R1. Phosphorylation at Tyr-720 and Tyr-807 is important for interaction with PLCG2. Phosphorylation at Tyr-977 is important for interaction with CBL. Dephosphorylation by PTPN2 negatively regulates downstream signaling and macrophage differentiation. Ubiquitinated. Becomes rapidly polyubiquitinated after autophosphorylation, leading to its degradation.

The protein resides in the cell membrane. The catalysed reaction is L-tyrosyl-[protein] + ATP = O-phospho-L-tyrosyl-[protein] + ADP + H(+). Present in an inactive conformation in the absence of bound ligand. CSF1 or IL34 binding leads to dimerization and activation by autophosphorylation on tyrosine residues. Its function is as follows. Tyrosine-protein kinase that acts as a cell-surface receptor for CSF1 and IL34 and plays an essential role in the regulation of survival, proliferation and differentiation of hematopoietic precursor cells, especially mononuclear phagocytes, such as macrophages and monocytes. Promotes the release of pro-inflammatory chemokines in response to IL34 and CSF1, and thereby plays an important role in innate immunity and in inflammatory processes. Plays an important role in the regulation of osteoclast proliferation and differentiation, the regulation of bone resorption, and is required for normal bone and tooth development. Required for normal male and female fertility, and for normal development of milk ducts and acinar structures in the mammary gland during pregnancy. Promotes reorganization of the actin cytoskeleton, regulates formation of membrane ruffles, cell adhesion and cell migration, and promotes cancer cell invasion. Activates several signaling pathways in response to ligand binding, including the ERK1/2 and the JNK pathway. Phosphorylates PIK3R1, PLCG2, GRB2, SLA2 and CBL. Activation of PLCG2 leads to the production of the cellular signaling molecules diacylglycerol and inositol 1,4,5-trisphosphate, that then lead to the activation of protein kinase C family members, especially PRKCD. Phosphorylation of PIK3R1, the regulatory subunit of phosphatidylinositol 3-kinase, leads to activation of the AKT1 signaling pathway. Activated CSF1R also mediates activation of the MAP kinases MAPK1/ERK2 and/or MAPK3/ERK1, and of the SRC family kinases SRC, FYN and YES1. Activated CSF1R transmits signals both via proteins that directly interact with phosphorylated tyrosine residues in its intracellular domain, or via adapter proteins, such as GRB2. Promotes activation of STAT family members STAT3, STAT5A and/or STAT5B. Promotes tyrosine phosphorylation of SHC1 and INPP5D/SHIP-1. Receptor signaling is down-regulated by protein phosphatases, such as INPP5D/SHIP-1, that dephosphorylate the receptor and its downstream effectors, and by rapid internalization of the activated receptor. In the central nervous system, may play a role in the development of microglia macrophages. This Felis catus (Cat) protein is Macrophage colony-stimulating factor 1 receptor (CSF1R).